Reading from the N-terminus, the 216-residue chain is Kynurenine formamidase (216 aa).

Trp24 serves as a coordination point for substrate. Residues His54, His58, and Asp60 each coordinate Zn(2+). His64 functions as the Proton donor/acceptor in the catalytic mechanism. Positions 164 and 176 each coordinate Zn(2+).

Belongs to the Cyclase 1 superfamily. KynB family. In terms of assembly, homodimer. Zn(2+) serves as cofactor.

The enzyme catalyses N-formyl-L-kynurenine + H2O = L-kynurenine + formate + H(+). Its pathway is amino-acid degradation; L-tryptophan degradation via kynurenine pathway; L-kynurenine from L-tryptophan: step 2/2. Functionally, catalyzes the hydrolysis of N-formyl-L-kynurenine to L-kynurenine, the second step in the kynurenine pathway of tryptophan degradation. The chain is Kynurenine formamidase from Erythrobacter litoralis (strain HTCC2594).